The following is a 190-amino-acid chain: RING finger protein 227 (190 aa).

The segment at 18 to 81 (CNICFRPYNL…RRAVTCPFCR (64 aa)) adopts an RING-type zinc-finger fold. A disordered region spans residues 108-147 (ARAEREGDPMGSPAKDSGEDGEDDDGEAESEKGAGPPSAG). The segment covering 126 to 135 (EDGEDDDGEA) has biased composition (acidic residues).

The polypeptide is RING finger protein 227 (Mus musculus (Mouse)).